The following is a 561-amino-acid chain: Transmembrane protein 209 (561 aa).

Serine 11 carries the phosphoserine modification. The chain crosses the membrane as a helical span at residues 28–48 (VVLAWGLLNVSMAGMIYTEMT). The N-linked (GlcNAc...) asparagine glycan is linked to asparagine 57. The helical transmembrane segment at 60–80 (YWPLWYIELALASLFSLNALF) threads the bilayer. Residue serine 98 is modified to Phosphoserine. Disordered stretches follow at residues 120 to 156 (LAATQISPSPPSPSIQGQSVLSYSPSRSPSTSPKFAT) and 200 to 232 (SSPYPTTVGPVESSGLRARYRSPPTVYNSPTDK). Residues 138–152 (SVLSYSPSRSPSTSP) are compositionally biased toward low complexity. Serine 201 and serine 248 each carry phosphoserine. Residues 250–270 (EEKQHRVKLGSPDSTSPSTSP) are disordered. Over residues 260–270 (SPDSTSPSTSP) the composition is skewed to low complexity. The N-linked (GlcNAc...) asparagine glycan is linked to asparagine 274. Serine 278 is modified (phosphoserine).

In terms of assembly, interacts with NUP205.

It is found in the membrane. It localises to the nucleus envelope. The protein localises to the golgi apparatus. Its subcellular location is the cytoplasm. In terms of biological role, nuclear envelope protein which in association with NUP205, may be involved in nuclear transport of various nuclear proteins in addition to MYC. The protein is Transmembrane protein 209 (Tmem209) of Mus musculus (Mouse).